The chain runs to 357 residues: Guanine nucleotide-binding protein alpha-1 subunit (357 aa).

The N-myristoyl glycine moiety is linked to residue Gly2. Cys4 carries S-palmitoyl cysteine lipidation. Residues 32 to 357 (NVIKLLLLGA…SSKLKGCGLF (326 aa)) enclose the G-alpha domain. Residues 35–48 (KLLLLGAGESGKST) are G1 motif. Residues Glu43, Ser44, Gly45, Lys46, Ser47, Thr48, Asp151, Leu176, Thr182, Gly204, Asn270, Lys271, Asp273, and Ala329 each coordinate GTP. Ser47 contacts Mg(2+). Residues 174–182 (DILHTRVPT) are G2 motif. Residue Thr182 participates in Mg(2+) binding. The tract at residues 197–206 (FRVFDVGGQR) is G3 motif. The interval 266 to 273 (ILFLNKVD) is G4 motif. The interval 327-332 (TCATDT) is G5 motif.

The protein belongs to the G-alpha family. G(q) subfamily. As to quaternary structure, g proteins are composed of 3 units; alpha, beta and gamma. The alpha chain contains the guanine nucleotide binding site. Requires Mg(2+) as cofactor.

In terms of biological role, guanine nucleotide-binding proteins (G proteins) are involved as modulators or transducers in various transmembrane signaling systems. The polypeptide is Guanine nucleotide-binding protein alpha-1 subunit (gpa-1) (Caenorhabditis briggsae).